Here is a 307-residue protein sequence, read N- to C-terminus: Protease HtpX homolog (307 aa).

A helical transmembrane segment spans residues 16–36 (LFMGVGYLIGGAAGAMIALVV). H130 provides a ligand contact to Zn(2+). E131 is an active-site residue. H134 contributes to the Zn(2+) binding site. 2 consecutive transmembrane segments (helical) span residues 145-165 (ITAT…FFGG) and 172-192 (GPGI…AMLV). E201 contacts Zn(2+). The disordered stretch occupies residues 278–307 (AGQSGSATPDPAPAPRGPWNGGAPRRGPWG).

It belongs to the peptidase M48B family. Zn(2+) is required as a cofactor.

The protein localises to the cell inner membrane. The sequence is that of Protease HtpX homolog from Nitrobacter hamburgensis (strain DSM 10229 / NCIMB 13809 / X14).